We begin with the raw amino-acid sequence, 468 residues long: Glutamyl-tRNA reductase (468 aa).

Residues 49-52 (TCNR), Ser109, 114-116 (EQQ), and Gln120 each bind substrate. The active-site Nucleophile is Cys50. Residue 189–194 (GAGAMG) participates in NADP(+) binding. The segment at 443-468 (VPSGFDAESRRGGGDMQSSPKRSPSN) is disordered. The segment covering 458-468 (MQSSPKRSPSN) has biased composition (polar residues).

It belongs to the glutamyl-tRNA reductase family. In terms of assembly, homodimer.

The catalysed reaction is (S)-4-amino-5-oxopentanoate + tRNA(Glu) + NADP(+) = L-glutamyl-tRNA(Glu) + NADPH + H(+). The protein operates within porphyrin-containing compound metabolism; protoporphyrin-IX biosynthesis; 5-aminolevulinate from L-glutamyl-tRNA(Glu): step 1/2. Its function is as follows. Catalyzes the NADPH-dependent reduction of glutamyl-tRNA(Glu) to glutamate 1-semialdehyde (GSA). The chain is Glutamyl-tRNA reductase from Mycobacterium tuberculosis (strain ATCC 25177 / H37Ra).